We begin with the raw amino-acid sequence, 249 residues long: Triosephosphate isomerase (249 aa).

Residue 9–11 coordinates substrate; sequence NWK. The Electrophile role is filled by histidine 94. Residue glutamate 166 is the Proton acceptor of the active site. Substrate contacts are provided by residues glycine 172, serine 212, and 233–234; that span reads GG.

It belongs to the triosephosphate isomerase family. In terms of assembly, homodimer.

The protein resides in the cytoplasm. The enzyme catalyses D-glyceraldehyde 3-phosphate = dihydroxyacetone phosphate. The protein operates within carbohydrate biosynthesis; gluconeogenesis. Its pathway is carbohydrate degradation; glycolysis; D-glyceraldehyde 3-phosphate from glycerone phosphate: step 1/1. In terms of biological role, involved in the gluconeogenesis. Catalyzes stereospecifically the conversion of dihydroxyacetone phosphate (DHAP) to D-glyceraldehyde-3-phosphate (G3P). The polypeptide is Triosephosphate isomerase (Treponema pallidum (strain Nichols)).